The primary structure comprises 897 residues: DNA endonuclease RBBP8 (897 aa).

Positions 22–45 are essential for binding to the MRN complex and for RPA focus formation on DNA damage; sequence DLWTKLKECHDREVQGLQVKVTKL. Residues 35-84 are a coiled coil; it reads VQGLQVKVTKLKQERILDAQRLEEFFTKNQQLREQQKVLHETIKVLEDRL. Positions 45-160 are required for interaction with LMO4, probably by stabilizing the interaction through RPPB8 dimerization; it reads LKQERILDAQ…AELECEEDVI (116 aa). Glycyl lysine isopeptide (Lys-Gly) (interchain with G-Cter in SUMO2) cross-links involve residues lysine 62 and lysine 115. Positions 117 to 138 form a coiled coil; sequence ITELMNERNTLQEENKKLSEQL. Lysine 193 is covalently cross-linked (Glycyl lysine isopeptide (Lys-Gly) (interchain with G-Cter in SUMO2)). Phosphoserine is present on residues serine 233 and serine 276. The segment covering 292 to 307 has biased composition (basic and acidic residues); the sequence is KQPFEESTRNTEDSLR. Positions 292 to 325 are disordered; that stretch reads KQPFEESTRNTEDSLRFSDSTSKTPPQEELPTRV. Residue threonine 315 is modified to Phosphothreonine; by CDK2. Phosphoserine occurs at positions 326, 327, and 349. Residues lysine 360 and lysine 378 each participate in a glycyl lysine isopeptide (Lys-Gly) (interchain with G-Cter in SUMO2) cross-link. Serine 379 bears the Phosphoserine mark. Glycyl lysine isopeptide (Lys-Gly) (interchain with G-Cter in SUMO2) cross-links involve residues lysine 396, lysine 404, and lysine 410. Residues 419 to 464 are disordered; that stretch reads QNRTEYGKDSNTDKHLEPLKSLGGRTSKRKKTEEESEHEVSCPQAS. Over residues 420-436 the composition is skewed to basic and acidic residues; it reads NRTEYGKDSNTDKHLEP. Residues lysine 438 and lysine 449 each participate in a glycyl lysine isopeptide (Lys-Gly) (interchain with G-Cter in SUMO2) cross-link. The short motif at 490–494 is the PXDLS motif element; sequence PLDLS. Residues 509–557 are damage-recruitment motif; sequence SETSKNKFRQVTLYEALKTIPKGFSSSRKASDGNCTLPKDSPGEPCSQE. A Glycyl lysine isopeptide (Lys-Gly) (interchain with G-Cter in SUMO2); alternate cross-link involves residue lysine 526. Residues lysine 530, lysine 572, and lysine 578 each participate in a glycyl lysine isopeptide (Lys-Gly) (interchain with G-Cter in SUMO2) cross-link. Residue lysine 604 forms a Glycyl lysine isopeptide (Lys-Gly) (interchain with G-Cter in SUMO2); alternate linkage. Glycyl lysine isopeptide (Lys-Gly) (interchain with G-Cter in SUMO2) cross-links involve residues lysine 613, lysine 638, and lysine 640. The tract at residues 641-685 is required for interaction with LMO4, probably by making physical contact with LMO4; it reads SLQNNQDVSFENIQWSIDPGADLSQYKMDVTVIDTKDGSQSKLGG. Residue serine 664 is modified to Phosphoserine; by ATM. Lysine 676 is covalently cross-linked (Glycyl lysine isopeptide (Lys-Gly) (interchain with G-Cter in SUMO2)). Serine 679 is subject to Phosphoserine. Positions 704–723 are disordered; the sequence is KKQEQKGEKSSNEERKMNDS. Residue lysine 719 forms a Glycyl lysine isopeptide (Lys-Gly) (interchain with G-Cter in SUMO2) linkage. A Phosphoserine modification is found at serine 723. Serine 745 bears the Phosphoserine; by ATM mark. A Glycyl lysine isopeptide (Lys-Gly) (interchain with G-Cter in SUMO2) cross-link involves residue lysine 782. Positions 840 to 842 match the KLHL15-binding motif; sequence FRY. The residue at position 847 (threonine 847) is a Phosphothreonine; by CDK1. A Phosphothreonine; by ATR modification is found at threonine 859. A Glycyl lysine isopeptide (Lys-Gly) (interchain with G-Cter in SUMO2) cross-link involves residue lysine 869. The segment at 873–897 is disordered; the sequence is DPCPRPKRRQPYNAIFSPKGKEQKT.

The protein belongs to the COM1/SAE2/CtIP family. As to quaternary structure, homotetramer; formed by antiparallel association of helical extensions protruding from the N-termini of two parallel coiled-coil dimers. Forms a dumbbell-shaped particle in which polar globular domains are held about 30 nm apart by a central rod. Homotetramerization is required for DNA-end resection and repair. Interacts (via the PXDLS motif) with CTBP1; the interaction is disrupted via binding of the adenovirus E1A to CTBP1. Component of the BRCA1-RBBP8 complex. Interacts (the Ser-327 phosphorylated form) with BRCA1 (via the C-terminal BRCT domains): the interaction occurs in the G2 phase, ubiquitinates RBBP8 and involves RBBP8 in BRCA1-dependent G2/M checkpoint control on DNA damage. Interacts with RB1. Interacts with the MRN complex; interacts directly with MRE11; the interaction is required for efficient homologous recombination (HR) and regulation of the MRN complex. Interacts directly with RAD50. Interacts (when phosphorylated by CDK1) with NBN; promoting association with the MRN complex. Interacts with LM04 (via the LIM zinc-binding 1 domain). Interacts with SIAH1. Interacts with RNF138. Interacts with EXD2. Interacts with CUL3 and KLHL15; this interaction leads to RBBP8 proteasomal degradation. Directly interacts with PIN1; this interaction depends upon RBBP8 phosphorylation, predominantly at Thr-315. Interacts with FZR1; this interaction leads to APC/C-mediated RBBP8 proteasomal degradation. Interacts with AUNIP; leading to recruitment of RBBP8 to sites of DNA damage. Interacts with SAMHD1. Interacts with HDGFL2. In terms of processing, hyperphosphorylation upon ionizing radiation results in dissociation from BRCA1. Phosphorylation at Thr-847 by CDK1 is essential for the recruitment to DNA and the DNA repair function. Phosphorylation at Thr-847 and Thr-859 promote interaction with NBN and recruitment to double-strand breaks (DSBs). Phosphorylated on Ser-327 as cells enter G2 phase. This phosphorylation is required for binding BRCA1 and for the G2/M DNA damage transition checkpoint control. Phosphorylation at Thr-315, probably catalyzed by CDK2, is required for PIN1-binding, while phosphorylation at Ser-276 serves as a PIN1 isomerization site. Phosphorylation at Thr-315 is cell-cycle dependent. It steadily increases during S phase, peaks at late S/G2 phase, and drops at G1. Phosphorylation is not required for tetramerization. Binds to DNA more strongly when dephosphorylated. Ubiquitinated. Ubiquitination at multiple sites by BRCA1 (via its N-terminal RING domain) does not lead to its proteasomal degradation but instead the ubiquitinated RBBP8 binds to chromatin following DNA damage and may play a role in G2/M checkpoint control. Ubiquitinated by RNF138 at its N-terminus. Ubiquitinated through 'Lys-48' by the E3 CUL3-KLHL15 complex; this modification leads to proteasomal degradation. Ubiquitinated by the E3 FZR1/APC/C complex; this modification leads to proteasomal degradation. In terms of tissue distribution, expressed in ER-positive breast cancer lines, but tends to be down-regulated ER-negative cells (at protein level).

The protein localises to the nucleus. The protein resides in the chromosome. In terms of biological role, endonuclease that cooperates with the MRE11-RAD50-NBN (MRN) complex in DNA-end resection, the first step of double-strand break (DSB) repair through the homologous recombination (HR) pathway. HR is restricted to S and G2 phases of the cell cycle and preferentially repairs DSBs resulting from replication fork collapse. Key determinant of DSB repair pathway choice, as it commits cells to HR by preventing classical non-homologous end-joining (NHEJ). Specifically promotes the endonuclease activity of the MRN complex to clear DNA ends containing protein adducts: recruited to DSBs by NBN following phosphorylation by CDK1, and promotes the endonuclease activity of MRE11 to clear protein-DNA adducts and generate clean double-strand break ends. Functions downstream of the MRN complex and ATM, promotes ATR activation and its recruitment to DSBs in the S/G2 phase facilitating the generation of ssDNA. Component of the BRCA1-RBBP8 complex that regulates CHEK1 activation and controls cell cycle G2/M checkpoints on DNA damage. During immunoglobulin heavy chain class-switch recombination, promotes microhomology-mediated alternative end joining (A-NHEJ) and plays an essential role in chromosomal translocations. Binds preferentially to DNA Y-junctions and to DNA substrates with blocked ends and promotes intermolecular DNA bridging. This is DNA endonuclease RBBP8 (RBBP8) from Homo sapiens (Human).